The sequence spans 669 residues: Coagulation factor XIII B chain (669 aa).

Positions 1-21 (MMTLRHLPFILLLILSGELYA) are cleaved as a signal peptide. Sushi domains are found at residues 25–89 (QCDF…PRCY), 90–149 (KKCL…SCRK), 152–211 (ETCL…QCNK), 212–270 (LMCS…ICEG), 273–330 (NRCP…KCIE), 335–392 (VACE…ECVE), 395–453 (ENCK…VCLE), 454–517 (PCTI…PMCI), 523–581 (GMCA…SCLE), and 582–648 (PCTL…PKCT). 20 disulfides stabilise this stretch: Cys-26–Cys-77, Cys-60–Cys-88, Cys-92–Cys-136, Cys-119–Cys-147, Cys-154–Cys-198, Cys-181–Cys-209, Cys-214–Cys-256, Cys-242–Cys-268, Cys-275–Cys-317, Cys-303–Cys-328, Cys-337–Cys-379, Cys-365–Cys-390, Cys-397–Cys-440, Cys-426–Cys-451, Cys-455–Cys-506, Cys-487–Cys-516, Cys-525–Cys-568, Cys-554–Cys-579, Cys-583–Cys-637, and Cys-617–Cys-647. Asn-163 carries N-linked (GlcNAc...) asparagine glycosylation. N-linked (GlcNAc...) asparagine glycosylation is present at Asn-546.

In terms of assembly, tetramer of two A chains (F13A1) and two B (F13B) chains. In terms of tissue distribution, predominantly expressed in liver and kidney.

The protein localises to the secreted. In terms of biological role, the B chain of factor XIII is not catalytically active, but is thought to stabilize the A subunits and regulate the rate of transglutaminase formation by thrombin. The polypeptide is Coagulation factor XIII B chain (F13b) (Mus musculus (Mouse)).